A 757-amino-acid chain; its full sequence is Endonuclease MutS2 (757 aa).

321–328 lines the ATP pocket; sequence GPNMGGKT. The Smr domain occupies 681-756; it reads IDIRGMTVEE…GTGVTVVEVE (76 aa).

This sequence belongs to the DNA mismatch repair MutS family. MutS2 subfamily. As to quaternary structure, homodimer. Binds to stalled ribosomes, contacting rRNA.

Functionally, endonuclease that is involved in the suppression of homologous recombination and thus may have a key role in the control of bacterial genetic diversity. Acts as a ribosome collision sensor, splitting the ribosome into its 2 subunits. Detects stalled/collided 70S ribosomes which it binds and splits by an ATP-hydrolysis driven conformational change. Acts upstream of the ribosome quality control system (RQC), a ribosome-associated complex that mediates the extraction of incompletely synthesized nascent chains from stalled ribosomes and their subsequent degradation. Probably generates substrates for RQC. In Thermotoga neapolitana (strain ATCC 49049 / DSM 4359 / NBRC 107923 / NS-E), this protein is Endonuclease MutS2.